The primary structure comprises 549 residues: Oxygen-dependent choline dehydrogenase (549 aa).

FAD is bound at residue 4–33; the sequence is DFVIIGSGSAGSAMAYRLSEDGRYSVIVIE. The active-site Proton acceptor is the His-465.

This sequence belongs to the GMC oxidoreductase family. FAD serves as cofactor.

It carries out the reaction choline + A = betaine aldehyde + AH2. The enzyme catalyses betaine aldehyde + NAD(+) + H2O = glycine betaine + NADH + 2 H(+). It participates in amine and polyamine biosynthesis; betaine biosynthesis via choline pathway; betaine aldehyde from choline (cytochrome c reductase route): step 1/1. Functionally, involved in the biosynthesis of the osmoprotectant glycine betaine. Catalyzes the oxidation of choline to betaine aldehyde and betaine aldehyde to glycine betaine at the same rate. The sequence is that of Oxygen-dependent choline dehydrogenase from Brucella canis (strain ATCC 23365 / NCTC 10854 / RM-666).